Consider the following 68-residue polypeptide: UPF0352 protein CPS_2611 (68 aa).

This sequence belongs to the UPF0352 family.

The polypeptide is UPF0352 protein CPS_2611 (Colwellia psychrerythraea (strain 34H / ATCC BAA-681) (Vibrio psychroerythus)).